The primary structure comprises 228 residues: Lipoprotein-releasing system ATP-binding protein LolD (228 aa).

One can recognise an ABC transporter domain in the interval leucine 7 to leucine 227. Alanine 43–serine 50 contacts ATP.

This sequence belongs to the ABC transporter superfamily. Lipoprotein translocase (TC 3.A.1.125) family. In terms of assembly, the complex is composed of two ATP-binding proteins (LolD) and two transmembrane proteins (LolC and LolE).

Its subcellular location is the cell inner membrane. Part of the ABC transporter complex LolCDE involved in the translocation of mature outer membrane-directed lipoproteins, from the inner membrane to the periplasmic chaperone, LolA. Responsible for the formation of the LolA-lipoprotein complex in an ATP-dependent manner. This is Lipoprotein-releasing system ATP-binding protein LolD from Rhizobium meliloti (strain 1021) (Ensifer meliloti).